The sequence spans 219 residues: Guanylate kinase (219 aa).

The Guanylate kinase-like domain maps to 15–194 (GLMFVLSSPS…AFESVKAILR (180 aa)). ATP is bound at residue 22–29 (SPSGAGKT).

It belongs to the guanylate kinase family.

It localises to the cytoplasm. It carries out the reaction GMP + ATP = GDP + ADP. Essential for recycling GMP and indirectly, cGMP. In Rhodopseudomonas palustris (strain BisB5), this protein is Guanylate kinase.